Reading from the N-terminus, the 273-residue chain is 2-dehydro-3-deoxyphosphooctonate aldolase (273 aa).

It belongs to the KdsA family.

The protein resides in the cytoplasm. The catalysed reaction is D-arabinose 5-phosphate + phosphoenolpyruvate + H2O = 3-deoxy-alpha-D-manno-2-octulosonate-8-phosphate + phosphate. It functions in the pathway carbohydrate biosynthesis; 3-deoxy-D-manno-octulosonate biosynthesis; 3-deoxy-D-manno-octulosonate from D-ribulose 5-phosphate: step 2/3. The protein operates within bacterial outer membrane biogenesis; lipopolysaccharide biosynthesis. The protein is 2-dehydro-3-deoxyphosphooctonate aldolase of Desulfatibacillum aliphaticivorans.